Reading from the N-terminus, the 157-residue chain is Protein NrdI (157 aa).

Belongs to the NrdI family.

Probably involved in ribonucleotide reductase function. This chain is Protein NrdI, found in Mycoplasma capricolum subsp. capricolum (strain California kid / ATCC 27343 / NCTC 10154).